A 72-amino-acid chain; its full sequence is Prokaryotic ubiquitin-like protein Pup (72 aa).

Positions 1-10 (MATRDSGGGQ) are enriched in gly residues. The disordered stretch occupies residues 1–41 (MATRDSGGGQQHTNRHADEVEEVAAEGNDASDLKERHEKLS). Residues 21–61 (EEVAAEGNDASDLKERHEKLSEDVDSLLDEIDDVLEENAEE) adopt a coiled-coil conformation. The ARC ATPase binding stretch occupies residues 28–66 (NDASDLKERHEKLSEDVDSLLDEIDDVLEENAEEFVKGY). Residues 31–41 (SDLKERHEKLS) show a composition bias toward basic and acidic residues. An Isoglutamyl lysine isopeptide (Glu-Lys) (interchain with K-? in acceptor proteins) cross-link involves residue glutamate 72.

The protein belongs to the prokaryotic ubiquitin-like protein family. Strongly interacts with the proteasome-associated ATPase ARC through a hydrophobic interface; the interacting region of Pup lies in its C-terminal half. There is one Pup binding site per ARC hexamer ring.

It participates in protein degradation; proteasomal Pup-dependent pathway. Its function is as follows. Protein modifier that is covalently attached to lysine residues of substrate proteins, thereby targeting them for proteasomal degradation. The tagging system is termed pupylation. This Frankia alni (strain DSM 45986 / CECT 9034 / ACN14a) protein is Prokaryotic ubiquitin-like protein Pup.